The following is a 371-amino-acid chain: MAIPRISPRKTLPLFAALALALAWAFAAPAFADGDDVVALTESTFEKEVGQDRGALVEFYAPWCGHCKKLAPEYEKLGASFKKAKSVFIAKVDCDEHKSVCSKYGVSGYPTIQWFPKGSLEPKKYEGQRSAEALAEFVNTEGGTNVKLATIPSSVVVLGPDNFDSIVLDENKDILVEFYAPWCGHCKHLAPIYEKLASVYKLDDGVVIANLDADKHKDLAEKYGVSGYPTLKFFPKGNKAGEDYDGGRELDDFVKFINEKCGTSRDTKGQLTSEAGRIASLDALAKEFLGAANDKRKEILSNMEEEVVKLSGSAAKHGKVYIAIAKKILDKGHDYTKKETERLERMLEKSISPSKADEFIIKKNVLSTFSS.

The first 27 residues, 1 to 27, serve as a signal peptide directing secretion; that stretch reads MAIPRISPRKTLPLFAALALALAWAFA. Thioredoxin domains lie at 28-143 and 147-262; these read APAF…TEGG and KLAT…EKCG. Residues Cys-64, Cys-67, Cys-183, and Cys-186 each act as nucleophile in the active site. 2 disulfide bridges follow: Cys-64–Cys-67 and Cys-183–Cys-186.

It belongs to the protein disulfide isomerase family.

It is found in the secreted. It catalyses the reaction Catalyzes the rearrangement of -S-S- bonds in proteins.. Acts as a protein-folding catalyst that interacts with nascent polypeptides to catalyze the formation, isomerization, and reduction or oxidation of disulfide bonds. May play a role in storage protein biogenesis. This Oryza sativa subsp. japonica (Rice) protein is Protein disulfide isomerase-like 2-2 (PDIL2-2).